We begin with the raw amino-acid sequence, 1002 residues long: TOG array regulator of axonemal microtubules protein 2 (1002 aa).

5 disordered regions span residues 54–74 (SSVLPSSEKPSQLSREHEDQS), 131–214 (KRRL…SAQE), 332–351 (ETRSLENEEDQKESSTKVQV), 402–421 (PLRGSGALSEPAGMSSPRRN), and 426–450 (LQRKRANRASLPSIPVSKQEPGFAR).

Belongs to the Crescerin family.

This chain is TOG array regulator of axonemal microtubules protein 2 (Togaram2), found in Mus musculus (Mouse).